A 173-amino-acid chain; its full sequence is 3-isopropylmalate dehydratase small subunit (173 aa).

It belongs to the LeuD family. LeuD type 2 subfamily. Heterodimer of LeuC and LeuD.

The enzyme catalyses (2R,3S)-3-isopropylmalate = (2S)-2-isopropylmalate. It functions in the pathway amino-acid biosynthesis; L-leucine biosynthesis; L-leucine from 3-methyl-2-oxobutanoate: step 2/4. Catalyzes the isomerization between 2-isopropylmalate and 3-isopropylmalate, via the formation of 2-isopropylmaleate. The protein is 3-isopropylmalate dehydratase small subunit of Caldicellulosiruptor saccharolyticus (strain ATCC 43494 / DSM 8903 / Tp8T 6331).